A 232-amino-acid polypeptide reads, in one-letter code: 7-cyano-7-deazaguanine synthase (232 aa).

7–17 (CSGGLDSVSLA) contacts ATP. Residues Cys185, Cys193, Cys196, and Cys199 each contribute to the Zn(2+) site.

This sequence belongs to the QueC family. Requires Zn(2+) as cofactor.

It carries out the reaction 7-carboxy-7-deazaguanine + NH4(+) + ATP = 7-cyano-7-deazaguanine + ADP + phosphate + H2O + H(+). It functions in the pathway purine metabolism; 7-cyano-7-deazaguanine biosynthesis. In terms of biological role, catalyzes the ATP-dependent conversion of 7-carboxy-7-deazaguanine (CDG) to 7-cyano-7-deazaguanine (preQ(0)). In Chelativorans sp. (strain BNC1), this protein is 7-cyano-7-deazaguanine synthase.